The chain runs to 311 residues: Ketoisovalerate oxidoreductase subunit VorB (311 aa).

In terms of assembly, heterotetramer of one alpha, one beta, one delta and one gamma chain.

It carries out the reaction 3-methyl-2-oxobutanoate + 2 oxidized [2Fe-2S]-[ferredoxin] + CoA = 2-methylpropanoyl-CoA + 2 reduced [2Fe-2S]-[ferredoxin] + CO2 + H(+). This chain is Ketoisovalerate oxidoreductase subunit VorB (vorB), found in Pyrococcus furiosus (strain ATCC 43587 / DSM 3638 / JCM 8422 / Vc1).